We begin with the raw amino-acid sequence, 252 residues long: Imidazole glycerol phosphate synthase subunit HisF (252 aa).

Catalysis depends on residues aspartate 11 and aspartate 130.

This sequence belongs to the HisA/HisF family. In terms of assembly, heterodimer of HisH and HisF.

Its subcellular location is the cytoplasm. It catalyses the reaction 5-[(5-phospho-1-deoxy-D-ribulos-1-ylimino)methylamino]-1-(5-phospho-beta-D-ribosyl)imidazole-4-carboxamide + L-glutamine = D-erythro-1-(imidazol-4-yl)glycerol 3-phosphate + 5-amino-1-(5-phospho-beta-D-ribosyl)imidazole-4-carboxamide + L-glutamate + H(+). It functions in the pathway amino-acid biosynthesis; L-histidine biosynthesis; L-histidine from 5-phospho-alpha-D-ribose 1-diphosphate: step 5/9. In terms of biological role, IGPS catalyzes the conversion of PRFAR and glutamine to IGP, AICAR and glutamate. The HisF subunit catalyzes the cyclization activity that produces IGP and AICAR from PRFAR using the ammonia provided by the HisH subunit. The chain is Imidazole glycerol phosphate synthase subunit HisF from Paramagnetospirillum magneticum (strain ATCC 700264 / AMB-1) (Magnetospirillum magneticum).